We begin with the raw amino-acid sequence, 168 residues long: Small ribosomal subunit protein uS9 (168 aa).

Residues 1 to 38 (MAKIADSIDSAQADSVENVESYSTETPESAAPAAPRPV) form a disordered region. Over residues 9–22 (DSAQADSVENVESY) the composition is skewed to polar residues. A compositionally biased stretch (low complexity) spans 23–37 (STETPESAAPAAPRP).

The protein belongs to the universal ribosomal protein uS9 family.

This chain is Small ribosomal subunit protein uS9, found in Leifsonia xyli subsp. xyli (strain CTCB07).